A 736-amino-acid polypeptide reads, in one-letter code: Catalase-peroxidase (736 aa).

Positions 1–21 (MSNEQKCPFSGTHGARTTVGT) are disordered. Positions 96–224 (WHSAGTYRTG…LAAVQMGLIY (129 aa)) form a cross-link, tryptophyl-tyrosyl-methioninium (Trp-Tyr) (with M-250). The Proton acceptor role is filled by histidine 97. The tryptophyl-tyrosyl-methioninium (Tyr-Met) (with W-96) cross-link spans 224-250 (YVNPEGPDGNPDPVASGRDIRETFARM). Residue histidine 265 participates in heme b binding.

Belongs to the peroxidase family. Peroxidase/catalase subfamily. As to quaternary structure, homodimer or homotetramer. Heme b is required as a cofactor. Formation of the three residue Trp-Tyr-Met cross-link is important for the catalase, but not the peroxidase activity of the enzyme.

The enzyme catalyses H2O2 + AH2 = A + 2 H2O. It catalyses the reaction 2 H2O2 = O2 + 2 H2O. Bifunctional enzyme with both catalase and broad-spectrum peroxidase activity. In Dechloromonas aromatica (strain RCB), this protein is Catalase-peroxidase.